The primary structure comprises 122 residues: uncharacterized protein (122 aa).

The next 2 membrane-spanning stretches (helical) occupy residues I34–V54 and F91–F111.

The protein localises to the cell membrane. This is an uncharacterized protein from Mycoplasma pneumoniae (strain ATCC 29342 / M129 / Subtype 1) (Mycoplasmoides pneumoniae).